The sequence spans 573 residues: PCNA-interacting partner (573 aa).

2 disordered regions span residues 470-505 and 531-560; these read VGKA…SKGK and PKVP…RGKL.

Belongs to the PARI family. As to quaternary structure, interacts with RAD51 and PCNA. Interacts with PARP1. Interacts with TASOR. As to expression, expressed in the ovary, Sertoli cells of the testis and in granular cells within the cerebellum.

The protein resides in the cytoplasm. It localises to the nucleus. In terms of biological role, required to suppress inappropriate homologous recombination, thereby playing a central role DNA repair and in the maintenance of genomic stability. Antagonizes homologous recombination by interfering with the formation of the RAD51-DNA homologous recombination structure. Binds single-strand DNA and poly(A) homopolymers. Positively regulate the poly(ADP-ribosyl)ation activity of PARP1; however such function may be indirect. In Mus musculus (Mouse), this protein is PCNA-interacting partner (Parpbp).